The sequence spans 60 residues: Large ribosomal subunit protein bL33 (60 aa).

This sequence belongs to the bacterial ribosomal protein bL33 family.

The sequence is that of Large ribosomal subunit protein bL33 from Chlorobium limicola (strain DSM 245 / NBRC 103803 / 6330).